Consider the following 355-residue polypeptide: Ornithine transcarbamylase, mitochondrial (355 aa).

The N-terminal 35 residues, 1 to 35, are a transit peptide targeting the mitochondrion; the sequence is MLFINLRTLLNNAALRNGHNFVVRNFRCGQPVQDK. The residue at position 71 (Lys71) is an N6-acetyllysine; alternate. Lys71 is modified (N6-succinyllysine; alternate). The residue at position 81 (Lys81) is an N6-succinyllysine. The residue at position 89 (Lys89) is an N6-acetyllysine; alternate. Position 89 is an N6-succinyllysine; alternate (Lys89). 91–95 contributes to the carbamoyl phosphate binding site; the sequence is STRTR. A Phosphoserine modification is found at Ser134. Arg142 serves as a coordination point for carbamoyl phosphate. Arg142 contributes to the L-ornithine binding site. Lys145 is subject to N6-acetyllysine; alternate. An N6-succinyllysine; alternate modification is found at Lys145. Residue His169 coordinates carbamoyl phosphate. Asn200 is a binding site for L-ornithine. Lys222, Lys232, and Lys239 each carry N6-acetyllysine; alternate. An N6-succinyllysine; alternate mark is found at Lys222, Lys232, and Lys239. The residue at position 244 (Lys244) is an N6-acetyllysine. Position 264-268 (264-268) interacts with L-ornithine; it reads DTWIS. Residues Lys275 and Lys290 each carry the N6-succinyllysine modification. Lys293 carries the N6-acetyllysine; alternate modification. Residue Lys293 is modified to N6-succinyllysine; alternate. 303–306 provides a ligand contact to L-ornithine; it reads HCLP. Cys304 is a catalytic residue. Residue Lys308 is modified to N6-acetyllysine; alternate. Lys308 carries the post-translational modification N6-succinyllysine; alternate. Arg331 lines the carbamoyl phosphate pocket. Residue Arg331 participates in L-ornithine binding.

This sequence belongs to the aspartate/ornithine carbamoyltransferase superfamily. OTCase family. In terms of assembly, homotrimer. In terms of processing, acetylation at Lys-89 negatively regulates ornithine carbamoyltransferase activity in response to nutrient signals.

The protein resides in the mitochondrion matrix. The catalysed reaction is carbamoyl phosphate + L-ornithine = L-citrulline + phosphate + H(+). Its pathway is nitrogen metabolism; urea cycle; L-citrulline from L-ornithine and carbamoyl phosphate: step 1/1. With respect to regulation, negatively regulated by lysine acetylation. Its function is as follows. Catalyzes the second step of the urea cycle, the condensation of carbamoyl phosphate with L-ornithine to form L-citrulline. The urea cycle ensures the detoxification of ammonia by converting it to urea for excretion. This Ovis aries (Sheep) protein is Ornithine transcarbamylase, mitochondrial.